The following is a 228-amino-acid chain: Leucyl/phenylalanyl-tRNA--protein transferase (228 aa).

Belongs to the L/F-transferase family.

The protein localises to the cytoplasm. It carries out the reaction N-terminal L-lysyl-[protein] + L-leucyl-tRNA(Leu) = N-terminal L-leucyl-L-lysyl-[protein] + tRNA(Leu) + H(+). It catalyses the reaction N-terminal L-arginyl-[protein] + L-leucyl-tRNA(Leu) = N-terminal L-leucyl-L-arginyl-[protein] + tRNA(Leu) + H(+). The enzyme catalyses L-phenylalanyl-tRNA(Phe) + an N-terminal L-alpha-aminoacyl-[protein] = an N-terminal L-phenylalanyl-L-alpha-aminoacyl-[protein] + tRNA(Phe). In terms of biological role, functions in the N-end rule pathway of protein degradation where it conjugates Leu, Phe and, less efficiently, Met from aminoacyl-tRNAs to the N-termini of proteins containing an N-terminal arginine or lysine. The polypeptide is Leucyl/phenylalanyl-tRNA--protein transferase (Thiobacillus denitrificans (strain ATCC 25259 / T1)).